Consider the following 495-residue polypeptide: Cytochrome P450 2E1 (495 aa).

Residue 298-303 (FAGTET) coordinates substrate. Cys-437 contributes to the heme binding site.

Belongs to the cytochrome P450 family. As to quaternary structure, interacts with chaperones HSP70 and HSP90; this interaction is required for initial targeting to mitochondria. The cofactor is heme.

The protein resides in the endoplasmic reticulum membrane. It is found in the microsome membrane. Its subcellular location is the mitochondrion inner membrane. It catalyses the reaction an organic molecule + reduced [NADPH--hemoprotein reductase] + O2 = an alcohol + oxidized [NADPH--hemoprotein reductase] + H2O + H(+). It carries out the reaction (5Z,8Z,11Z)-eicosatrienoate + reduced [NADPH--hemoprotein reductase] + O2 = 19-hydroxy-(5Z,8Z,11Z)-eicosatrienoate + oxidized [NADPH--hemoprotein reductase] + H2O + H(+). The enzyme catalyses (5Z,8Z,11Z,14Z,17Z)-eicosapentaenoate + reduced [NADPH--hemoprotein reductase] + O2 = 19-hydroxy-(5Z,8Z,11Z,14Z,17Z)-eicosapentaenoate + oxidized [NADPH--hemoprotein reductase] + H2O + H(+). The catalysed reaction is (4Z,7Z,10Z,13Z,16Z,19Z)-docosahexaenoate + reduced [NADPH--hemoprotein reductase] + O2 = 21-hydroxy-(4Z,7Z,10Z,13Z,16Z,19Z)-docosahexaenoate + oxidized [NADPH--hemoprotein reductase] + H2O + H(+). It catalyses the reaction dodecanoate + reduced [NADPH--hemoprotein reductase] + O2 = 11-hydroxydodecanoate + oxidized [NADPH--hemoprotein reductase] + H2O + H(+). It carries out the reaction tetradecanoate + reduced [NADPH--hemoprotein reductase] + O2 = 13-hydroxytetradecanoate + oxidized [NADPH--hemoprotein reductase] + H2O + H(+). The enzyme catalyses 4-nitrophenol + NADPH + O2 + H(+) = 4-nitrocatechol + NADP(+) + H2O. It participates in lipid metabolism; fatty acid metabolism. The omega-1 hydroxylase activity is stimulated by cytochrome b5. A cytochrome P450 monooxygenase involved in the metabolism of fatty acids. Mechanistically, uses molecular oxygen inserting one oxygen atom into a substrate, and reducing the second into a water molecule, with two electrons provided by NADPH via cytochrome P450 reductase (NADPH--hemoprotein reductase). Catalyzes the hydroxylation of carbon-hydrogen bonds. Hydroxylates fatty acids specifically at the omega-1 position displaying the highest catalytic activity for saturated fatty acids. May be involved in the oxidative metabolism of xenobiotics. The chain is Cytochrome P450 2E1 (CYP2E1) from Bos taurus (Bovine).